We begin with the raw amino-acid sequence, 47 residues long: Photosystem II reaction center protein K (47 aa).

A propeptide spanning residues 1-10 (MAPLTLDLLA) is cleaved from the precursor. Residues 26–46 (LPLIPLLFFLLVFVWQAAVGF) form a helical membrane-spanning segment.

The protein belongs to the PsbK family. As to quaternary structure, PSII is composed of 1 copy each of membrane proteins PsbA, PsbB, PsbC, PsbD, PsbE, PsbF, PsbH, PsbI, PsbJ, PsbK, PsbL, PsbM, PsbT, PsbX, PsbY, Psb30/Ycf12, peripheral proteins PsbO, CyanoQ (PsbQ), PsbU, PsbV and a large number of cofactors. It forms dimeric complexes.

It is found in the cellular thylakoid membrane. Functionally, one of the components of the core complex of photosystem II (PSII). PSII is a light-driven water:plastoquinone oxidoreductase that uses light energy to abstract electrons from H(2)O, generating O(2) and a proton gradient subsequently used for ATP formation. It consists of a core antenna complex that captures photons, and an electron transfer chain that converts photonic excitation into a charge separation. This chain is Photosystem II reaction center protein K, found in Prochlorococcus marinus (strain SARG / CCMP1375 / SS120).